The chain runs to 262 residues: Acyl-[acyl-carrier-protein]--UDP-N-acetylglucosamine O-acyltransferase (262 aa).

It belongs to the transferase hexapeptide repeat family. LpxA subfamily. Homotrimer.

The protein localises to the cytoplasm. It catalyses the reaction a (3R)-hydroxyacyl-[ACP] + UDP-N-acetyl-alpha-D-glucosamine = a UDP-3-O-[(3R)-3-hydroxyacyl]-N-acetyl-alpha-D-glucosamine + holo-[ACP]. It participates in glycolipid biosynthesis; lipid IV(A) biosynthesis; lipid IV(A) from (3R)-3-hydroxytetradecanoyl-[acyl-carrier-protein] and UDP-N-acetyl-alpha-D-glucosamine: step 1/6. Involved in the biosynthesis of lipid A, a phosphorylated glycolipid that anchors the lipopolysaccharide to the outer membrane of the cell. This is Acyl-[acyl-carrier-protein]--UDP-N-acetylglucosamine O-acyltransferase from Sodalis glossinidius (strain morsitans).